A 296-amino-acid polypeptide reads, in one-letter code: Prostate androgen-regulated mucin-like protein 1 homolog (296 aa).

The N-terminal stretch at 1 to 20 (MVCKALITLCIFAAGLRVQG) is a signal peptide. The Extracellular segment spans residues 21 to 244 (SPTPTLLPVS…EVENALSSGS (224 aa)). 3 N-linked (GlcNAc...) asparagine glycosylation sites follow: Asn-62, Asn-96, and Asn-108. A disordered region spans residues 73–220 (LTSQLPTHPR…SPQDTEPGKV (148 aa)). A compositionally biased stretch (basic and acidic residues) spans 80 to 96 (HPREEAVTSPPLKREVN). The segment covering 97–111 (STDSSPTGFSSNSSG) has biased composition (low complexity). A compositionally biased stretch (polar residues) spans 125–145 (SPETSVPATGSQSPTLLFSQG). Composition is skewed to low complexity over residues 146–175 (PTSA…TVNN) and 195–205 (SHTPTSHVTEP). N-linked (GlcNAc...) asparagine glycosylation occurs at Asn-168. The segment covering 206-217 (VPKEKSPQDTEP) has biased composition (basic and acidic residues). The helical transmembrane segment at 245-265 (IAAITVTVIAVVLLVFGAAAY) threads the bilayer. The Cytoplasmic portion of the chain corresponds to 266-296 (LKIRHSSYGRLLDDHDYGSWGNYNNPLYDDS). The residue at position 284 (Ser-284) is a Phosphoserine.

The protein belongs to the PARM family. In terms of processing, highly N-glycosylated and O-glycosylated. Expressed in prostate. Detected in other organs at low levels, these include the heart and various tissues of the urogenital tract. Not detected in mammary gland.

It is found in the cell membrane. The protein localises to the golgi apparatus membrane. It localises to the endosome membrane. Functionally, may regulate TLP1 expression and telomerase activity, thus enabling certain prostatic cells to resist apoptosis. This is Prostate androgen-regulated mucin-like protein 1 homolog (Parm1) from Rattus norvegicus (Rat).